A 245-amino-acid polypeptide reads, in one-letter code: Polyhedrin (245 aa).

The protein belongs to the polyhedrin family.

In terms of biological role, major component of the virus occlusion bodies, which are large proteinaceous structures (polyhedra), that protect the virus from the outside environment for extended periods until they are ingested by insect larvae. This is Polyhedrin (PH) from Hyphantria cunea nuclear polyhedrosis virus (HcNPV).